An 85-amino-acid polypeptide reads, in one-letter code: Putative plasmid stability protein y4jJ (85 aa).

Residues 66-78 (EAEHFNQLRDKTP) are compositionally biased toward basic and acidic residues. The interval 66 to 85 (EAEHFNQLRDKTPAEPMSFE) is disordered.

To P.syringae pv tomato plasmid stability protein StbC.

Functionally, involved in plasmid stability. The chain is Putative plasmid stability protein y4jJ from Sinorhizobium fredii (strain NBRC 101917 / NGR234).